Consider the following 292-residue polypeptide: MASLKDMRVRIASTKATQKITKAMQMVAASKLRRAQLAAEAARPYAEKMDAVISNIAAASAGSPASSKLLAGTGRDQVHLLLVCTGERGLSGAFNSSIVRLARERALALMNQGKDVKFFCVGRKGYEQLRRQFEKQIIAHVDLRSVRQIGFVHAEDIAKQVIARFDAGEFDVCTLFYSRFKSVIAQIPTAQQIIPLVVEAPAANAAPVALYEYEPEEDEILSALLPRNVGVQIFRALLENNASFYGAQMSAMDNATRNAGEMIRKQTLVYNRTRQAMITKELIEIISGAEAV.

Belongs to the ATPase gamma chain family. In terms of assembly, F-type ATPases have 2 components, CF(1) - the catalytic core - and CF(0) - the membrane proton channel. CF(1) has five subunits: alpha(3), beta(3), gamma(1), delta(1), epsilon(1). CF(0) has three main subunits: a, b and c.

The protein resides in the cell inner membrane. Produces ATP from ADP in the presence of a proton gradient across the membrane. The gamma chain is believed to be important in regulating ATPase activity and the flow of protons through the CF(0) complex. The sequence is that of ATP synthase gamma chain from Bradyrhizobium sp. (strain ORS 278).